The chain runs to 300 residues: Ribosomal protein bS6--L-glutamate ligase (300 aa).

Residues 104 to 287 enclose the ATP-grasp domain; the sequence is MQLLARQGID…IAGKMIRWIE (184 aa). ATP-binding positions include Lys-141, 178–179, Asp-187, and 211–213; these read EY and RSN. Residues Asp-248, Glu-260, and Asn-262 each contribute to the Mg(2+) site. Mn(2+) is bound by residues Asp-248, Glu-260, and Asn-262.

Belongs to the RimK family. Requires Mg(2+) as cofactor. Mn(2+) serves as cofactor.

Its function is as follows. An L-glutamate ligase that catalyzes the ATP-dependent post-translational addition of glutamate residues to the C-terminus of ribosomal protein bS6 (RpsF). Is also able to catalyze the synthesis of poly-alpha-glutamate in vitro, via ATP hydrolysis from unprotected glutamate as substrate. The number of glutamate residues added to either RpsF or to poly-alpha-glutamate changes with pH. The polypeptide is Ribosomal protein bS6--L-glutamate ligase (Escherichia fergusonii (strain ATCC 35469 / DSM 13698 / CCUG 18766 / IAM 14443 / JCM 21226 / LMG 7866 / NBRC 102419 / NCTC 12128 / CDC 0568-73)).